Reading from the N-terminus, the 370-residue chain is 2-aminoethylphosphonate--pyruvate transaminase (370 aa).

Residue Lys-194 is modified to N6-(pyridoxal phosphate)lysine.

It belongs to the class-V pyridoxal-phosphate-dependent aminotransferase family. PhnW subfamily. Homodimer. Pyridoxal 5'-phosphate is required as a cofactor.

The catalysed reaction is (2-aminoethyl)phosphonate + pyruvate = phosphonoacetaldehyde + L-alanine. Involved in phosphonate degradation. This is 2-aminoethylphosphonate--pyruvate transaminase from Paraburkholderia phymatum (strain DSM 17167 / CIP 108236 / LMG 21445 / STM815) (Burkholderia phymatum).